A 248-amino-acid chain; its full sequence is MTSARTPRRKTVAGASAQQVGLNFETPDDIVCGVDEAGRGPLAGPVVAAAVIFDPAKPMIRGLDDSKVLTAKKRDELYDKIVDRALAYCIASASVEEIDSLNILHATMLAMKRAVEGLSVVPTLVKIDGNRCPTLSVRSEAVIGGDALVKSISAASILAKVTRDRMLLELHQAHPVYGFNAHAGYGTPQHLAALREHGPCEHHRRSFAPVREAHLRLGTGVPLPAGNVIVVSEVMLDDDAFGERSGAA.

The RNase H type-2 domain maps to 29–219 (DIVCGVDEAG…VREAHLRLGT (191 aa)). A divalent metal cation contacts are provided by D35, E36, and D128.

Belongs to the RNase HII family. Mn(2+) serves as cofactor. Requires Mg(2+) as cofactor.

The protein localises to the cytoplasm. It carries out the reaction Endonucleolytic cleavage to 5'-phosphomonoester.. In terms of biological role, endonuclease that specifically degrades the RNA of RNA-DNA hybrids. This Paraburkholderia xenovorans (strain LB400) protein is Ribonuclease HII.